The sequence spans 416 residues: Xyloglucan O-acetyltransferase 1 (416 aa).

Residues 1–14 (MGLNEQQNVPSQRK) lie on the Cytoplasmic side of the membrane. A helical; Signal-anchor for type II membrane protein transmembrane segment spans residues 15 to 35 (IIVFIVLAFIPIALFRLCFNN). Over 36-416 (PFSSIKDTSL…MIEMLRRWKV (381 aa)) the chain is Lumenal. 4 disulfides stabilise this stretch: C79/C129, C100/C165, C109/C395, and C318/C391. An N-linked (GlcNAc...) asparagine glycan is attached at N96. The GDS motif motif lies at 152-154 (GDS). The active-site Nucleophile is the S154. 3 N-linked (GlcNAc...) asparagine glycosylation sites follow: N194, N269, and N319. The active-site Proton donor is the D390. The DXXH motif signature appears at 390–393 (DCLH). H393 functions as the Proton acceptor in the catalytic mechanism.

Belongs to the PC-esterase family. TBL subfamily.

Its subcellular location is the golgi apparatus membrane. Xyloglucan acetyltransferase that catalyzes the acetylation of fucosylated Gal residues on xyloglucan side chains. Predominantly catalyze 6-O-monoacetylation of Gal residues in the Fuc-Gal-Xyl trisaccharide side chains of xyloglucan oligomers. Involved in xyloglucan specific O-acetylation in roots and rosette leaves. This Arabidopsis thaliana (Mouse-ear cress) protein is Xyloglucan O-acetyltransferase 1.